A 904-amino-acid polypeptide reads, in one-letter code: Alpha-actinin-4 (904 aa).

A disordered region spans residues 1–27 (MVDYHSAGQPYPYGGNGPGPNGDYMAQ). Residues 1 to 259 (MVDYHSAGQP…IMTYVSSFYH (259 aa)) are actin-binding. Calponin-homology (CH) domains are found at residues 43-147 (KQQR…LRFA) and 156-262 (TSAK…HAFS). Spectrin repeat units lie at residues 286–396 (HLME…WLLN), 406–511 (HLAE…ALEK), 521–632 (ELHL…ALQD), and 642–745 (RLRR…EVEN). EF-hand domains follow at residues 758 to 793 (EQMQEFRASFNHFDKDHCGALGPEEFKACLISLGYD) and 799 to 834 (QGDAEFNRIMSLVDPNGSGSVTFQAFIDFMSRETTD). The Ca(2+) site is built by Asp-771, Asp-773, Glu-782, Asp-812, Asn-814, Ser-816, and Ser-818.

It belongs to the alpha-actinin family. Homodimer; antiparallel. Component of the CART complex. May interact with nuclear receptors.

The protein localises to the nucleus. It localises to the cytoplasm. It is found in the cell junction. Its subcellular location is the perinuclear region. F-actin cross-linking protein which is thought to anchor actin to a variety of intracellular structures. This is a bundling protein. Probably involved in vesicular trafficking via its association with the CART complex. Involved in tight junction assembly in epithelial cells. May also function as a transcriptional coactivator, stimulating transcription mediated by nuclear hormone receptors. This Gallus gallus (Chicken) protein is Alpha-actinin-4.